A 684-amino-acid polypeptide reads, in one-letter code: Transcriptional regulatory protein RCO1 (684 aa).

Residue Met1 is modified to N-acetylmethionine. The disordered stretch occupies residues 1 to 48 (MDTSKKDTTRSPSHSNSSSPSSSSLSSSSSKEKKRPKRLSSQNVNYDL). Residues 10 to 29 (RSPSHSNSSSPSSSSLSSSS) show a composition bias toward low complexity. Residue Ser68 is modified to Phosphoserine. The PHD-type 1 zinc-finger motif lies at 260-309 (EDFCSACNQSGSFLCCDTCPKSFHFLCLDPPIDPNNLPKGDWHCNECKFK). The PHD-type 2; atypical zinc-finger motif lies at 414-472 (FLICYKCNQTRLGSWSHPENSRLIMTCDYCQTPWHLDCVPRASFKNLGSKWKCPLHSPT). At Ser683 the chain carries Phosphoserine.

Component of the RPD3C(S) complex composed of at least EAF3, RCO1, RPD3, SIN3, and UME1.

Its subcellular location is the nucleus. In terms of biological role, catalytic component of the RPD3C(S) histone deacetylase complex responsible for the deacetylation of lysine residues on the N-terminal part of the core histones (H2A, H2B, H3 and H4). Histone deacetylation gives a tag for epigenetic repression and plays an important role in transcriptional regulation, cell cycle progression, DNA damage response, osmotic stress response and developmental events. The sequence is that of Transcriptional regulatory protein RCO1 (RCO1) from Saccharomyces cerevisiae (strain ATCC 204508 / S288c) (Baker's yeast).